We begin with the raw amino-acid sequence, 520 residues long: Peptide chain release factor 3 (520 aa).

The 270-residue stretch at 8–277 (ESRKTFAIIS…FAPMPNARQT (270 aa)) folds into the tr-type G domain. Residues 17-24 (SHPDAGKT), 85-89 (DTPGH), and 139-142 (NKLD) contribute to the GTP site.

This sequence belongs to the TRAFAC class translation factor GTPase superfamily. Classic translation factor GTPase family. PrfC subfamily.

The protein localises to the cytoplasm. In terms of biological role, increases the formation of ribosomal termination complexes and stimulates activities of RF-1 and RF-2. It binds guanine nucleotides and has strong preference for UGA stop codons. It may interact directly with the ribosome. The stimulation of RF-1 and RF-2 is significantly reduced by GTP and GDP, but not by GMP. The chain is Peptide chain release factor 3 from Staphylococcus aureus (strain USA300 / TCH1516).